Reading from the N-terminus, the 125-residue chain is Large ribosomal subunit protein bL12 (125 aa).

It belongs to the bacterial ribosomal protein bL12 family. In terms of assembly, homodimer. Part of the ribosomal stalk of the 50S ribosomal subunit. Forms a multimeric L10(L12)X complex, where L10 forms an elongated spine to which 2 to 4 L12 dimers bind in a sequential fashion. Binds GTP-bound translation factors.

Functionally, forms part of the ribosomal stalk which helps the ribosome interact with GTP-bound translation factors. Is thus essential for accurate translation. The protein is Large ribosomal subunit protein bL12 of Anaeromyxobacter sp. (strain Fw109-5).